The sequence spans 449 residues: Tubulin alpha-1C chain (449 aa).

An MREC motif motif is present at residues 1-4 (MREC). Gln-11 provides a ligand contact to GTP. N6-acetyllysine is present on Lys-40. GTP-binding residues include Glu-71, Ser-140, Gly-144, Thr-145, Thr-179, Asn-206, and Asn-228. Glu-71 contacts Mg(2+). Glu-254 is an active-site residue. Tyr-282 carries the post-translational modification 3'-nitrotyrosine. The segment at 429–449 (EKDYEEVGADSAEGDDEGDEY) is disordered. A compositionally biased stretch (acidic residues) spans 431-449 (DYEEVGADSAEGDDEGDEY). A Phosphotyrosine modification is found at Tyr-432. Ser-439 is modified (phosphoserine). Tyr-449 is subject to 3'-nitrotyrosine.

Belongs to the tubulin family. As to quaternary structure, dimer of alpha and beta chains. A typical microtubule is a hollow water-filled tube with an outer diameter of 25 nm and an inner diameter of 15 nM. Alpha-beta heterodimers associate head-to-tail to form protofilaments running lengthwise along the microtubule wall with the beta-tubulin subunit facing the microtubule plus end conferring a structural polarity. Microtubules usually have 13 protofilaments but different protofilament numbers can be found in some organisms and specialized cells. Mg(2+) is required as a cofactor. In terms of processing, some glutamate residues at the C-terminus are polyglycylated, resulting in polyglycine chains on the gamma-carboxyl group. Glycylation is mainly limited to tubulin incorporated into axonemes (cilia and flagella) whereas glutamylation is prevalent in neuronal cells, centrioles, axonemes, and the mitotic spindle. Both modifications can coexist on the same protein on adjacent residues, and lowering polyglycylation levels increases polyglutamylation, and reciprocally. Cilia and flagella glycylation is required for their stability and maintenance. Flagella glycylation controls sperm motility. Some glutamate residues at the C-terminus are polyglutamylated, resulting in polyglutamate chains on the gamma-carboxyl group. Polyglutamylation plays a key role in microtubule severing by spastin (SPAST). SPAST preferentially recognizes and acts on microtubules decorated with short polyglutamate tails: severing activity by SPAST increases as the number of glutamates per tubulin rises from one to eight, but decreases beyond this glutamylation threshold. Glutamylation is also involved in cilia motility. Post-translationally, acetylation of alpha chains at Lys-40 is located inside the microtubule lumen. This modification has been correlated with increased microtubule stability, intracellular transport and ciliary assembly. In terms of processing, methylation of alpha chains at Lys-40 is found in mitotic microtubules and is required for normal mitosis and cytokinesis contributing to genomic stability. Nitration of Tyr-449 is irreversible and interferes with normal dynein intracellular distribution. Post-translationally, undergoes a tyrosination/detyrosination cycle, the cyclic removal and re-addition of a C-terminal tyrosine residue by the enzymes tubulin tyrosine carboxypeptidase (MATCAP1, VASH1 or VASH2) and tubulin tyrosine ligase (TTL), respectively. In terms of processing, tyrosination promotes microtubule interaction with CAP-Gly domain-containing proteins such as CLIP1, CLIP2 and DCTN1. Tyrosination regulates the initiation of dynein-dynactin motility via interaction with DCTN1, which brings the dynein-dynactin complex into contact with microtubules. In neurons, tyrosinated tubulins mediate the initiation of retrograde vesicle transport. Detyrosination is involved in metaphase plate congression by guiding chromosomes during mitosis: detyrosination promotes interaction with CENPE, promoting pole-proximal transport of chromosomes toward the equator. Detyrosination increases microtubules-dependent mechanotransduction in dystrophic cardiac and skeletal muscle. In cardiomyocytes, detyrosinated microtubules are required to resist to contractile compression during contraction: detyrosination promotes association with desmin (DES) at force-generating sarcomeres, leading to buckled microtubules and mechanical resistance to contraction.

It is found in the cytoplasm. The protein resides in the cytoskeleton. The catalysed reaction is GTP + H2O = GDP + phosphate + H(+). Its function is as follows. Tubulin is the major constituent of microtubules, a cylinder consisting of laterally associated linear protofilaments composed of alpha- and beta-tubulin heterodimers. Microtubules grow by the addition of GTP-tubulin dimers to the microtubule end, where a stabilizing cap forms. Below the cap, tubulin dimers are in GDP-bound state, owing to GTPase activity of alpha-tubulin. The chain is Tubulin alpha-1C chain (TUBA1C) from Bos taurus (Bovine).